We begin with the raw amino-acid sequence, 326 residues long: Putative ribose-phosphate pyrophosphokinase 2 (326 aa).

ATP is bound by residues 43-45 (DGE) and 102-103 (RQ). His136 lines the Mg(2+) pocket. D-ribose 5-phosphate contacts are provided by residues Asp225 and 229–233 (NTGKT).

It belongs to the ribose-phosphate pyrophosphokinase family. Class I subfamily. Homohexamer. It depends on Mg(2+) as a cofactor.

The protein localises to the cytoplasm. It catalyses the reaction D-ribose 5-phosphate + ATP = 5-phospho-alpha-D-ribose 1-diphosphate + AMP + H(+). It functions in the pathway metabolic intermediate biosynthesis; 5-phospho-alpha-D-ribose 1-diphosphate biosynthesis; 5-phospho-alpha-D-ribose 1-diphosphate from D-ribose 5-phosphate (route I): step 1/1. In terms of biological role, involved in the biosynthesis of the central metabolite phospho-alpha-D-ribosyl-1-pyrophosphate (PRPP) via the transfer of pyrophosphoryl group from ATP to 1-hydroxyl of ribose-5-phosphate (Rib-5-P). This chain is Putative ribose-phosphate pyrophosphokinase 2, found in Streptococcus pyogenes serotype M3 (strain SSI-1).